The chain runs to 360 residues: Viral protein TPX (360 aa).

The disordered stretch occupies residues 269 to 289; that stretch reads TVTPISSPSPTPTPTPTPTPT. One copy of the Thr-Pro(N) repeat lies at 270 to 291; sequence VTPISSPSPTPTPTPTPTPTPT. Over residues 275–289 the composition is skewed to pro residues; the sequence is SPSPTPTPTPTPTPT. Positions 278–353 are 3 Thr-Pro repeats regions and two near identical repeats; it reads PTPTPTPTPT…PTPTPTPTPT (76 aa). Positions 292–301 form a repeat; that stretch reads YDITYVVFDV. One copy of the Thr-Pro(N) repeat lies at 302-322; it reads TPSPTPTPTLTSTPTPTPTPT. The segment at residues 323-332 is a repeat; sequence YDITYVIFDV. The segment at 332–360 is disordered; that stretch reads VTPSPTPTPTPTPTPTPTPTPTSTTSSNI. The stretch at 333–353 is one Thr-Pro(N) repeat; sequence TPSPTPTPTPTPTPTPTPTPT. Over residues 335–351 the composition is skewed to pro residues; it reads SPTPTPTPTPTPTPTPT.

In Thermoproteus tenax (TTV1), this protein is Viral protein TPX.